A 417-amino-acid chain; its full sequence is Dibenzothiophene monooxygenase (417 aa).

The segment at D19–W125 is helical N-terminus. FMN contacts are provided by residues Y96, N129–N134, K159–S163, R282, A369–R370, and H391. Residues W126–P234 are central beta-barrel N-terminus. A lid loop region spans residues S131–K142. The interval N235 to Q409 is helical C-terminus.

Belongs to the DszC flavin monooxygenase family. In terms of assembly, homotetramer.

It is found in the cytoplasm. It carries out the reaction dibenzothiophene + 2 FMNH2 + 2 O2 = dibenzothiophene 5,5-dioxide + 2 FMN + 2 H2O + 2 H(+). The catalysed reaction is dibenzothiophene + FMNH2 + O2 = dibenzothiophene 5-oxide + FMN + H2O + H(+). It catalyses the reaction dibenzothiophene 5-oxide + FMNH2 + O2 = dibenzothiophene 5,5-dioxide + FMN + H2O + H(+). The protein operates within sulfur metabolism; dibenzothiophene degradation. Catalyzes the first step of the '4S' desulfurization pathway that removes covalently bound sulfur from dibenzothiophene (DBT) without breaking carbon-carbon bonds. Sulfur dioxygenase which converts DBT to DBT-sulfone (DBTO2 or DBT 5,5-dioxide) in a stepwise manner. This Rhodococcus erythropolis (Arthrobacter picolinophilus) protein is Dibenzothiophene monooxygenase.